The sequence spans 329 residues: GTP 3',8-cyclase (329 aa).

The Radical SAM core domain maps to methionine 1 to alanine 229. Residue arginine 8 participates in GTP binding. Residues cysteine 15 and cysteine 19 each contribute to the [4Fe-4S] cluster site. Residue tyrosine 21 participates in S-adenosyl-L-methionine binding. Cysteine 22 lines the [4Fe-4S] cluster pocket. GTP is bound at residue arginine 60. An S-adenosyl-L-methionine-binding site is contributed by glycine 64. Threonine 91 is a GTP binding site. S-adenosyl-L-methionine is bound at residue serine 115. Lysine 155 is a binding site for GTP. Residue methionine 189 participates in S-adenosyl-L-methionine binding. [4Fe-4S] cluster contacts are provided by cysteine 252 and cysteine 255. Position 257–259 (arginine 257–arginine 259) interacts with GTP. [4Fe-4S] cluster is bound at residue cysteine 269.

The protein belongs to the radical SAM superfamily. MoaA family. As to quaternary structure, monomer and homodimer. [4Fe-4S] cluster serves as cofactor.

It carries out the reaction GTP + AH2 + S-adenosyl-L-methionine = (8S)-3',8-cyclo-7,8-dihydroguanosine 5'-triphosphate + 5'-deoxyadenosine + L-methionine + A + H(+). Its pathway is cofactor biosynthesis; molybdopterin biosynthesis. Its function is as follows. Catalyzes the cyclization of GTP to (8S)-3',8-cyclo-7,8-dihydroguanosine 5'-triphosphate. This is GTP 3',8-cyclase from Rippkaea orientalis (strain PCC 8801 / RF-1) (Cyanothece sp. (strain PCC 8801)).